We begin with the raw amino-acid sequence, 163 residues long: MKFFAVLTLCIIGAIAHPLTSDEANLVKSSWNQVKHNEVDILAAVFKAYPDIQAKFPQFAGKDLDSIKTSGQFATHATRIVSFLSELIALSGNEANLSAVYGLVKKLGVDHKNRGITQGQFNEFKTALISYLSSHVSWGDNVAAAWEHALENTYTVAFEVIPA.

The first 16 residues, 1–16, serve as a signal peptide directing secretion; sequence MKFFAVLTLCIIGAIA. The Globin domain occupies 18-163; it reads PLTSDEANLV…YTVAFEVIPA (146 aa). Heme b is bound by residues H76 and H111.

It belongs to the globin family.

This chain is Globin CTT-V (CTT-V), found in Chironomus thummi piger (Midge).